The sequence spans 475 residues: Lactate utilization protein B (475 aa).

4Fe-4S ferredoxin-type domains follow at residues 304–334 (GTEF…GHSY) and 353–382 (YEDH…LHEL). Residues C313, C316, C319, C323, C366, C369, and C373 each contribute to the [4Fe-4S] cluster site.

It belongs to the LutB/YkgF family.

Its function is as follows. Is involved in L-lactate degradation and allows cells to grow with lactate as the sole carbon source. Has probably a role as an electron transporter during oxidation of L-lactate. The chain is Lactate utilization protein B from Shouchella clausii (strain KSM-K16) (Alkalihalobacillus clausii).